Consider the following 339-residue polypeptide: D-erythrose-4-phosphate dehydrogenase (339 aa).

NAD(+) is bound at residue 11–12 (RI). Substrate contacts are provided by residues 158 to 160 (SCT), R204, 217 to 218 (TK), and R240. The active-site Nucleophile is the C159. N322 is a binding site for NAD(+).

Belongs to the glyceraldehyde-3-phosphate dehydrogenase family. Epd subfamily. In terms of assembly, homotetramer.

It is found in the cytoplasm. The enzyme catalyses D-erythrose 4-phosphate + NAD(+) + H2O = 4-phospho-D-erythronate + NADH + 2 H(+). The protein operates within cofactor biosynthesis; pyridoxine 5'-phosphate biosynthesis; pyridoxine 5'-phosphate from D-erythrose 4-phosphate: step 1/5. Catalyzes the NAD-dependent conversion of D-erythrose 4-phosphate to 4-phosphoerythronate. In Aliivibrio fischeri (strain ATCC 700601 / ES114) (Vibrio fischeri), this protein is D-erythrose-4-phosphate dehydrogenase.